A 267-amino-acid chain; its full sequence is Thiazole synthase (267 aa).

K110 functions as the Schiff-base intermediate with DXP in the catalytic mechanism. 1-deoxy-D-xylulose 5-phosphate is bound by residues G171, 197-198 (AG), and 219-220 (NT).

This sequence belongs to the ThiG family. As to quaternary structure, homotetramer. Forms heterodimers with either ThiH or ThiS.

It is found in the cytoplasm. The enzyme catalyses [ThiS sulfur-carrier protein]-C-terminal-Gly-aminoethanethioate + 2-iminoacetate + 1-deoxy-D-xylulose 5-phosphate = [ThiS sulfur-carrier protein]-C-terminal Gly-Gly + 2-[(2R,5Z)-2-carboxy-4-methylthiazol-5(2H)-ylidene]ethyl phosphate + 2 H2O + H(+). It participates in cofactor biosynthesis; thiamine diphosphate biosynthesis. Functionally, catalyzes the rearrangement of 1-deoxy-D-xylulose 5-phosphate (DXP) to produce the thiazole phosphate moiety of thiamine. Sulfur is provided by the thiocarboxylate moiety of the carrier protein ThiS. In vitro, sulfur can be provided by H(2)S. In Maricaulis maris (strain MCS10) (Caulobacter maris), this protein is Thiazole synthase.